Reading from the N-terminus, the 199-residue chain is NAD(P)H dehydrogenase (quinone) (199 aa).

Residues 4-190 enclose the Flavodoxin-like domain; that stretch reads VLVLYYSAYG…AGARYQGKTI (187 aa). Residues 10–15 and 78–80 each bind FMN; these read SAYGHI and TRF. Tyr-12 contributes to the NAD(+) binding site. Trp-98 provides a ligand contact to substrate. FMN-binding positions include 113–119 and His-134; that span reads STATQHG.

The protein belongs to the WrbA family. The cofactor is FMN.

It catalyses the reaction a quinone + NADH + H(+) = a quinol + NAD(+). The enzyme catalyses a quinone + NADPH + H(+) = a quinol + NADP(+). The sequence is that of NAD(P)H dehydrogenase (quinone) from Rhodopseudomonas palustris (strain TIE-1).